The sequence spans 777 residues: Beta-hexosaminidase (777 aa).

Positions 1-18 (MKRLTFGACICCLLSLMA) are cleaved as a signal peptide. C19 carries the N-palmitoyl cysteine lipid modification. C19 is lipidated: S-diacylglycerol cysteine. A PA14 domain is found at 625–766 (APKPGLTIRT…VMIRLKGEEK (142 aa)).

Belongs to the glycosyl hydrolase 20 family.

The protein localises to the cell outer membrane. The catalysed reaction is Hydrolysis of terminal non-reducing N-acetyl-D-hexosamine residues in N-acetyl-beta-D-hexosaminides.. This is Beta-hexosaminidase (nahA) from Porphyromonas gingivalis (strain ATCC BAA-308 / W83).